We begin with the raw amino-acid sequence, 918 residues long: Cell cycle and apoptosis regulator protein 2 (918 aa).

The interval 1 to 35 (MSQFKRQRINPLPGGRNFSGTASTSLLGPPPGLLT) is disordered. Threonine 35 bears the Phosphothreonine mark. N6-acetyllysine; by KAT8 is present on lysine 112. Residue lysine 123 is modified to N6-methyllysine. Position 124 is a phosphoserine (serine 124). 3 disordered regions span residues 179-219 (NRFP…KPRH), 446-510 (KAAE…PAVI), and 568-637 (VSPP…ASED). The residue at position 180 (arginine 180) is an Omega-N-methylarginine. Position 215 is an N6-acetyllysine; by KAT8 (lysine 215). 2 stretches are compositionally biased toward low complexity: residues 447-468 (AAEA…EQAP) and 482-492 (AETPEATTQQE). Threonine 454 carries the post-translational modification Phosphothreonine; by ATM, ATR and CK2. Threonine 484 carries the phosphothreonine modification. Phosphoserine is present on serine 569. The segment covering 572–597 (EPEKEEAAKEEEAIKEEVVKEPKDEA) has biased composition (basic and acidic residues). Residue lysine 586 forms a Glycyl lysine isopeptide (Lys-Gly) (interchain with G-Cter in SUMO2 and SUMO3); alternate linkage. A Glycyl lysine isopeptide (Lys-Gly) (interchain with G-Cter in SUMO2); alternate cross-link involves residue lysine 586. The segment at 605–665 (ESEAPLKEDG…EEFAGAKLED (61 aa)) is interaction with MCC. Serine 622, serine 670, serine 673, serine 676, serine 682, and serine 803 each carry phosphoserine. An interaction with NR1D1 region spans residues 699 to 918 (DCLLAFVFFD…VEKEEPAPSN (220 aa)). A coiled-coil region spans residues 824 to 904 (LENRIHTLEL…QLEIQRVVEK (81 aa)). Threonine 892 carries the phosphothreonine modification.

Component of the DBIRD complex. Interacts with ZNF326/ZIRD; the interaction is direct. Interacts (via N-terminus) with SIRT1, which inhibits the deacetylation of substrates. Interacts (via N-terminus) with SUV39H1; this interaction abolishes the interaction with SIRT1. Component of a nuclear receptor-mediated transcription complex composed of at least ZNF335, CCAR2 and EMSY; the complex stimulates the transcription of nuclear receptor target genes such as SOX9 and HOXA1. Within the complex interacts with EMSY and interacts with ZNF335 (via C-terminus). Components of this complex may associate with components of a histone methylation complex to form a complex at least composed of ZNF335, HCFC1, CCAR2, EMSY, MKI67, RBBP5, ASH2L and WDR5. Within this complex, interacts with ASH2L. Interacts with NR1D1. Interacts (via N-terminus) with ESR1 and ESR2. Interacts (via N-terminus) with HDAC3 (via C-terminus). Interacts with HDAC1 and MED2F. Interacts with MCC. Interacts (via N-terminus) with NR1H2 and NR1H3 in a ligand-independent manner. Interacts with CSNK2A1. Interacts (via N-terminus) with p53/TP53. Interacts (via N-terminus) with BRCA1 (via the BRCT domains). Interacts (via N-terminus) with CHEK2 (via protein kinase domain). Interacts with PSEM3. Interacts (via N-terminus) with PSIA3 and SENP1. The sumoylated form shows a preferential interaction with SIRT1 as compared to its unmodified form. Interacts with CECR2; may form part of the CERF-1 and/or CEF-5 ISWI chromatin remodeling complexes in embryonic stem cells. Post-translationally, ATM/ATR-mediated phosphorylation at Thr-454 upon DNA damage promotes binding to SIRT1. Phosphorylation at Thr-454 promotes its sumoylation by switching the binding partner of CCAR2 from SENP1 to PIAS3. In terms of processing, acetylation at Lys-112 and Lys-215 by KAT8 prevents inhibitory binding to SIRT1 and increases its deacetylase activity. Genotoxic stress induces its sumoylation and sumoylation promotes the SIRT1-CCAR2 interaction which in turn inhibits SIRT1-mediated deacetylation of p53/TP53. Sumoylation leads to transcriptional activation of p53/TP53 by sequestering SIRT1 from p53/TP53. Desumoylated by SENP1.

The protein resides in the nucleus. It localises to the cytoplasm. Its subcellular location is the cytoskeleton. It is found in the spindle. Core component of the DBIRD complex, a multiprotein complex that acts at the interface between core mRNP particles and RNA polymerase II (RNAPII) and integrates transcript elongation with the regulation of alternative splicing: the DBIRD complex affects local transcript elongation rates and alternative splicing of a large set of exons embedded in (A + T)-rich DNA regions. Inhibits SIRT1 deacetylase activity leading to increasing levels of p53/TP53 acetylation and p53-mediated apoptosis. Inhibits SUV39H1 methyltransferase activity. Mediates ligand-dependent transcriptional activation by nuclear hormone receptors. Plays a critical role in maintaining genomic stability and cellular integrity following UV-induced genotoxic stress. Regulates the circadian expression of the core clock components NR1D1 and BMAL1. Enhances the transcriptional repressor activity of NR1D1 through stabilization of NR1D1 protein levels by preventing its ubiquitination and subsequent degradation. Represses the ligand-dependent transcriptional activation function of ESR2. Acts as a regulator of PCK1 expression and gluconeogenesis by a mechanism that involves, at least in part, both NR1D1 and SIRT1. Negatively regulates the deacetylase activity of HDAC3 and can alter its subcellular localization. Positively regulates the beta-catenin pathway (canonical Wnt signaling pathway) and is required for MCC-mediated repression of the beta-catenin pathway. Represses ligand-dependent transcriptional activation function of NR1H2 and NR1H3 and inhibits the interaction of SIRT1 with NR1H3. Plays an important role in tumor suppression through p53/TP53 regulation; stabilizes p53/TP53 by affecting its interaction with ubiquitin ligase MDM2. Represses the transcriptional activator activity of BRCA1. Inhibits SIRT1 in a CHEK2 and PSEM3-dependent manner and inhibits the activity of CHEK2 in vitro. This is Cell cycle and apoptosis regulator protein 2 (CCAR2) from Pongo abelii (Sumatran orangutan).